The sequence spans 221 residues: Very-long-chain (3R)-3-hydroxyacyl-CoA dehydratase PASTICCINO 2 (221 aa).

The Cytoplasmic segment spans residues 1-11 (MAGFLSVVRRV). The chain crosses the membrane as a helical span at residues 12–32 (YLTLYNWIVFAGWAQVLYLAI). The Lumenal portion of the chain corresponds to 33-51 (TTLKETGYENVYDAIEKPL). A helical transmembrane segment spans residues 52–70 (QLAQTAAVLEILHGLVGLV). The Cytoplasmic portion of the chain corresponds to 71–76 (RSPVSA). Residues 77 to 95 (TLPQIGSRLFLTWGILYSF) form a helical membrane-spanning segment. Residues 96 to 100 (PEVRS) lie on the Lumenal side of the membrane. A helical membrane pass occupies residues 101–122 (HFLVTSLVISWSITEIIRYSFF). Residues 123 to 142 (GFKEALGFAPSWHLWLRYSS) lie on the Cytoplasmic side of the membrane. The chain crosses the membrane as a helical span at residues 143–165 (FLLLYPTGITSEVGLIYLALPHI). Catalysis depends on residues Tyr-147 and Glu-154. Residues 166 to 184 (KTSEMYSVRMPNILNFSFD) are Lumenal-facing. The helical transmembrane segment at 185–204 (FFYATILVLAIYVPGSPHMY) threads the bilayer. Topologically, residues 205–221 (RYMLGQRKRALSKSKRE) are cytoplasmic.

This sequence belongs to the very long-chain fatty acids dehydratase HACD family. As to quaternary structure, interacts with CDKA-1; but only with the 'Tyr-15' phosphorylated protein. Interacts with PAS1. Part of the fatty acid elongase complex which contains a beta-ketoacyl-CoA synthase (KCS), a beta-ketoacyl-CoA reductase (KCR), a beta-hydroxyacyl-CoA dehydratase (HCD) and an enoyl-CoA reductase (ECR). As to expression, high expression in young seedlings, roots, root tips, flowers and young siliques. Lower levels in leaves and stems.

The protein resides in the endoplasmic reticulum membrane. The protein localises to the cytoplasm. It localises to the nucleus. It carries out the reaction a very-long-chain (3R)-3-hydroxyacyl-CoA = a very-long-chain (2E)-enoyl-CoA + H2O. It participates in lipid metabolism; fatty acid biosynthesis. Catalyzes the third of the four reactions of the long-chain fatty acids elongation cycle. This endoplasmic reticulum-bound enzymatic process, allows the addition of two carbons to the chain of long- and very long-chain fatty acids/VLCFAs per cycle. This enzyme catalyzes the dehydration of the 3-hydroxyacyl-CoA intermediate into trans-2,3-enoyl-CoA, within each cycle of fatty acid elongation. Thereby, it participates in the production of VLCFAs of different chain lengths that are involved in multiple biological processes as precursors of membrane lipids and lipid mediators. May be an anti-phosphatase that prevents CDKA-1 dephosphorylation and activation. Involved in the hormonal control of cell division and differentiation. Required for proliferation control of meristematic and non-meristematic cells. Negative regulator of the cell cycle. The sequence is that of Very-long-chain (3R)-3-hydroxyacyl-CoA dehydratase PASTICCINO 2 (PAS2) from Arabidopsis thaliana (Mouse-ear cress).